A 140-amino-acid chain; its full sequence is Nucleoside diphosphate kinase (140 aa).

6 residues coordinate ATP: Lys11, Phe59, Arg87, Thr93, Arg104, and Asn114. The active-site Pros-phosphohistidine intermediate is His117.

It belongs to the NDK family. As to quaternary structure, homotetramer. The cofactor is Mg(2+).

It is found in the cytoplasm. It carries out the reaction a 2'-deoxyribonucleoside 5'-diphosphate + ATP = a 2'-deoxyribonucleoside 5'-triphosphate + ADP. It catalyses the reaction a ribonucleoside 5'-diphosphate + ATP = a ribonucleoside 5'-triphosphate + ADP. Functionally, major role in the synthesis of nucleoside triphosphates other than ATP. The ATP gamma phosphate is transferred to the NDP beta phosphate via a ping-pong mechanism, using a phosphorylated active-site intermediate. This chain is Nucleoside diphosphate kinase, found in Novosphingobium aromaticivorans (strain ATCC 700278 / DSM 12444 / CCUG 56034 / CIP 105152 / NBRC 16084 / F199).